We begin with the raw amino-acid sequence, 449 residues long: Tryptophan--tRNA ligase (449 aa).

ATP is bound by residues Thr10 to Thr12 and Gly18 to Asn19. A 'HIGH' region motif is present at residues Thr11–Asn19. Asp143 is a binding site for L-tryptophan. Residues Gly155–Asp157, Leu197, and Lys204–Ser208 each bind ATP. Positions Lys204–Ser208 match the 'KMSKS' region motif.

The protein belongs to the class-I aminoacyl-tRNA synthetase family. In terms of assembly, homodimer.

It localises to the cytoplasm. The catalysed reaction is tRNA(Trp) + L-tryptophan + ATP = L-tryptophyl-tRNA(Trp) + AMP + diphosphate + H(+). Catalyzes the attachment of tryptophan to tRNA(Trp). This is Tryptophan--tRNA ligase from Pseudomonas syringae pv. tomato (strain ATCC BAA-871 / DC3000).